A 375-amino-acid chain; its full sequence is DNA replication and repair protein RecF (375 aa).

ATP is bound at residue G30–T37.

It belongs to the RecF family.

It is found in the cytoplasm. The RecF protein is involved in DNA metabolism; it is required for DNA replication and normal SOS inducibility. RecF binds preferentially to single-stranded, linear DNA. It also seems to bind ATP. The protein is DNA replication and repair protein RecF of Symbiobacterium thermophilum (strain DSM 24528 / JCM 14929 / IAM 14863 / T).